A 1165-amino-acid polypeptide reads, in one-letter code: Valine--tRNA ligase (1165 aa).

The short motif at Pro-43–His-53 is the 'HIGH' region element. Positions Lys-800–Thr-804 match the 'KMSKS' region motif. Residue Lys-803 participates in ATP binding. 2 coiled-coil regions span residues Lys-1001–Gln-1032 and His-1097–Ser-1165.

It belongs to the class-I aminoacyl-tRNA synthetase family. ValS type 1 subfamily. As to quaternary structure, monomer.

The protein localises to the cytoplasm. The catalysed reaction is tRNA(Val) + L-valine + ATP = L-valyl-tRNA(Val) + AMP + diphosphate. Catalyzes the attachment of valine to tRNA(Val). As ValRS can inadvertently accommodate and process structurally similar amino acids such as threonine, to avoid such errors, it has a 'posttransfer' editing activity that hydrolyzes mischarged Thr-tRNA(Val) in a tRNA-dependent manner. This Aquifex aeolicus (strain VF5) protein is Valine--tRNA ligase.